Consider the following 594-residue polypeptide: Alpha-1,4-glucan:maltose-1-phosphate maltosyltransferase (594 aa).

The tract at residues 244–270 (NRKGRNNSLTPGPDDPGSPYAIGSEEG) is disordered. 3 residues coordinate alpha-maltose 1-phosphate: Lys246, Gln306, and Asp341. The active-site Nucleophile is the Asp377. Asn378 contacts alpha-maltose 1-phosphate. Glu406 functions as the Proton donor in the catalytic mechanism. 517–518 (KY) is a binding site for alpha-maltose 1-phosphate.

This sequence belongs to the glycosyl hydrolase 13 family. GlgE subfamily. Homodimer.

It carries out the reaction alpha-maltose 1-phosphate + [(1-&gt;4)-alpha-D-glucosyl](n) = [(1-&gt;4)-alpha-D-glucosyl](n+2) + phosphate. Maltosyltransferase that uses maltose 1-phosphate (M1P) as the sugar donor to elongate linear or branched alpha-(1-&gt;4)-glucans. Is involved in a branched alpha-glucan biosynthetic pathway from trehalose, together with TreS, Mak and GlgB. The protein is Alpha-1,4-glucan:maltose-1-phosphate maltosyltransferase of Cereibacter sphaeroides (Rhodobacter sphaeroides).